Reading from the N-terminus, the 74-residue chain is Ubiquitin-like protein FUBI (74 aa).

It belongs to the ubiquitin family.

In Rattus norvegicus (Rat), this protein is Ubiquitin-like protein FUBI (Fau).